The chain runs to 334 residues: Transcription factor TGA2.1 (334 aa).

A compositionally biased stretch (polar residues) spans 1–13 (MADASSRTDTSIV). A disordered region spans residues 1–49 (MADASSRTDTSIVVDNDDKNHQLENGHSGAVMASNSSDRSDRSDKLMDQ). Over residues 38-49 (DRSDRSDKLMDQ) the composition is skewed to basic and acidic residues. A bZIP domain is found at 48 to 92 (DQKTIRRLAQNREAARKSRLRKKAYVQQLESSKLKLAQLEQELQK). Residues 50–70 (KTIRRLAQNREAARKSRLRKK) are basic motif. The tract at residues 76–90 (LESSKLKLAQLEQEL) is leucine-zipper. The DOG1 domain occupies 115–331 (ALTFDLEYTR…RALSSLWLAR (217 aa)).

Belongs to the bZIP family. As to quaternary structure, interacts with NPR1/NH1 and NPR3/NH3.

It is found in the nucleus. Functionally, plays a negative role in rice basal defense responses to the bacterial blight pathogen Xanthomomas oryzae pv. oryzae (Xoo). May function in both positive and negative regulation of rice defense genes. Binds DNA in vitro. Acts as a transcriptional activator when bound to NPR1/NH1 in vitro. Binds to the promoter sequence of CRK10 in vitro. The polypeptide is Transcription factor TGA2.1 (Oryza sativa subsp. japonica (Rice)).